The sequence spans 361 residues: tRNA/tmRNA (uracil-C(5))-methyltransferase (361 aa).

Residues glutamine 183, tyrosine 211, asparagine 216, glutamate 232, and aspartate 294 each contribute to the S-adenosyl-L-methionine site. Cysteine 319 acts as the Nucleophile in catalysis. The Proton acceptor role is filled by glutamate 353.

This sequence belongs to the class I-like SAM-binding methyltransferase superfamily. RNA M5U methyltransferase family. TrmA subfamily.

The catalysed reaction is uridine(54) in tRNA + S-adenosyl-L-methionine = 5-methyluridine(54) in tRNA + S-adenosyl-L-homocysteine + H(+). It catalyses the reaction uridine(341) in tmRNA + S-adenosyl-L-methionine = 5-methyluridine(341) in tmRNA + S-adenosyl-L-homocysteine + H(+). In terms of biological role, dual-specificity methyltransferase that catalyzes the formation of 5-methyluridine at position 54 (m5U54) in all tRNAs, and that of position 341 (m5U341) in tmRNA (transfer-mRNA). This is tRNA/tmRNA (uracil-C(5))-methyltransferase from Acinetobacter baylyi (strain ATCC 33305 / BD413 / ADP1).